Consider the following 284-residue polypeptide: Ribose-phosphate pyrophosphokinase 1 (284 aa).

Residue 34–36 (DGE) participates in ATP binding. Mg(2+) is bound by residues H126 and D163. K186 is a catalytic residue. Residues R188, D211, and 215-219 (STGGT) contribute to the D-ribose 5-phosphate site.

It belongs to the ribose-phosphate pyrophosphokinase family. Class III (archaeal) subfamily. Mg(2+) serves as cofactor.

The protein localises to the cytoplasm. It catalyses the reaction D-ribose 5-phosphate + ATP = 5-phospho-alpha-D-ribose 1-diphosphate + AMP + H(+). The protein operates within metabolic intermediate biosynthesis; 5-phospho-alpha-D-ribose 1-diphosphate biosynthesis; 5-phospho-alpha-D-ribose 1-diphosphate from D-ribose 5-phosphate (route I): step 1/1. Functionally, involved in the biosynthesis of the central metabolite phospho-alpha-D-ribosyl-1-pyrophosphate (PRPP) via the transfer of pyrophosphoryl group from ATP to 1-hydroxyl of ribose-5-phosphate (Rib-5-P). This chain is Ribose-phosphate pyrophosphokinase 1, found in Archaeoglobus fulgidus (strain ATCC 49558 / DSM 4304 / JCM 9628 / NBRC 100126 / VC-16).